We begin with the raw amino-acid sequence, 152 residues long: Endoribonuclease YbeY (152 aa).

The Zn(2+) site is built by H118, H122, and H128.

Belongs to the endoribonuclease YbeY family. It depends on Zn(2+) as a cofactor.

Its subcellular location is the cytoplasm. Functionally, single strand-specific metallo-endoribonuclease involved in late-stage 70S ribosome quality control and in maturation of the 3' terminus of the 16S rRNA. The sequence is that of Endoribonuclease YbeY from Lacticaseibacillus casei (strain BL23) (Lactobacillus casei).